The chain runs to 570 residues: CRISPR-associated protein Cas8a1/Csx13 (570 aa).

Disordered regions lie at residues 1–23 and 551–570; these read MACMAPRGPAAIPHPSSERAGLR and GGEAAELEDADEAAGASEQS.

This sequence belongs to the CRISPR-associated protein Cas8a1/Csx13 family. Myxan subtype subfamily.

Functionally, CRISPR (clustered regularly interspaced short palindromic repeat) is an adaptive immune system that provides protection against mobile genetic elements (viruses, transposable elements and conjugative plasmids). CRISPR clusters contain spacers, sequences complementary to antecedent mobile elements, and target invading nucleic acids. CRISPR clusters are transcribed and processed into CRISPR RNA (crRNA). Functions in an unknown fashion to stimulate transcription of fruA independently of the intracellular A- and E-developmental signals. This chain is CRISPR-associated protein Cas8a1/Csx13 (devT), found in Myxococcus xanthus (strain DK1622).